A 1685-amino-acid polypeptide reads, in one-letter code: PHD and RING finger domain-containing protein 1 (1685 aa).

Residues 1 to 82 (MDDDNLDELV…GSEDSEDGIE (82 aa)) form a disordered region. The span at 41-81 (DSEDDTGSEQDDDTDGEETEGLSEEEDPEDRSGSEDSEDGI) shows a compositional bias: acidic residues. The segment at 109–150 (CPICLNAFRDQAVGTPETCAHYFCLDCIIEWSRNANSCPVDR) adopts an RING-type; degenerate zinc-finger fold. The PHD-type zinc finger occupies 188 to 238 (PTFCEVCGRSDREDRLLLCDGCDAGYHMECLDPPLQEVPVDEWFCPECAVP). Disordered stretches follow at residues 333 to 390 (PLTP…KLKN), 449 to 483 (DSNG…VARP), 537 to 590 (SAKR…GLSC), 606 to 777 (TPVR…GSSF), and 809 to 860 (KVQR…LLPS). Threonine 335 is subject to Phosphothreonine. Composition is skewed to basic residues over residues 339-364 (PAKR…RSSV) and 372-387 (RAKK…KGRK). Phosphoserine is present on residues serine 450 and serine 460. Composition is skewed to polar residues over residues 606 to 625 (TPVR…GNLS) and 637 to 662 (SPRL…NFPS). The span at 671 to 682 (QKTDPRRPDFSK) shows a compositional bias: basic and acidic residues. Polar residues-rich tracts occupy residues 694–709 (SNST…QTVE) and 737–751 (SSRG…TSGS). A phosphoserine mark is found at serine 817, serine 848, serine 849, serine 867, serine 870, serine 922, serine 948, serine 984, and serine 1002. Positions 835–860 (PFDPTGSDSSPPSSSPESLGSGLLPS) are enriched in low complexity. Disordered stretches follow at residues 892-1229 (GTEM…VSEV), 1290-1355 (QLDD…APSD), and 1369-1390 (TTLS…SGRG). The segment covering 922-934 (SDLEQEGLGEIEP) has biased composition (acidic residues). Over residues 1001-1010 (SSRSRSTSSS) the composition is skewed to low complexity. Composition is skewed to basic residues over residues 1011–1031 (RSRK…RTRS) and 1054–1064 (KRHRAKTKSRR). The span at 1065–1075 (SSSDRASSQDR) shows a compositional bias: basic and acidic residues. 2 stretches are compositionally biased toward basic residues: residues 1089–1102 (GPWG…KSRS) and 1117–1129 (SRRR…GSRS). Basic and acidic residues-rich tracts occupy residues 1130 to 1143 (RGRD…LERD) and 1151 to 1165 (RSRE…MTRS). Residues serine 1135 and serine 1139 each carry the phosphoserine modification. The segment covering 1181–1191 (RTRRPHSREKH) has biased composition (basic residues). Over residues 1192-1201 (PHSPEKKGAV) the composition is skewed to basic and acidic residues. Serine 1205 bears the Phosphoserine mark. Positions 1292–1305 (DDMSSPPSPESTDS) are enriched in low complexity. Serine 1372 and serine 1383 each carry phosphoserine. Threonine 1416 is subject to Phosphothreonine. Disordered regions lie at residues 1421–1448 (EAEA…EGDW), 1466–1501 (LPPP…VGTL), and 1569–1591 (LAVP…AEKT). Residues 1577 to 1591 (SEERTATPKTAAEKT) show a composition bias toward basic and acidic residues. Positions 1589 to 1615 (EKTKKEEYMKKLHMQERAVEEVKLAIK) form a coiled coil.

As to quaternary structure, interacts with POLR2A (via the C-terminal domain).

This is PHD and RING finger domain-containing protein 1 from Rattus norvegicus (Rat).